Reading from the N-terminus, the 440-residue chain is L-seryl-tRNA(Sec) selenium transferase (440 aa).

At Lys282 the chain carries N6-(pyridoxal phosphate)lysine.

The protein belongs to the SelA family. Pyridoxal 5'-phosphate serves as cofactor.

The protein localises to the cytoplasm. The catalysed reaction is L-seryl-tRNA(Sec) + selenophosphate + H(+) = L-selenocysteinyl-tRNA(Sec) + phosphate. It participates in aminoacyl-tRNA biosynthesis; selenocysteinyl-tRNA(Sec) biosynthesis; selenocysteinyl-tRNA(Sec) from L-seryl-tRNA(Sec) (bacterial route): step 1/1. Converts seryl-tRNA(Sec) to selenocysteinyl-tRNA(Sec) required for selenoprotein biosynthesis. The chain is L-seryl-tRNA(Sec) selenium transferase from Campylobacter jejuni subsp. jejuni serotype O:2 (strain ATCC 700819 / NCTC 11168).